Reading from the N-terminus, the 159-residue chain is 17.7 kDa class I heat shock protein (159 aa).

Residues Asp-45–Gly-159 enclose the sHSP domain.

This sequence belongs to the small heat shock protein (HSP20) family. As to quaternary structure, may form oligomeric structures.

It localises to the cytoplasm. This is 17.7 kDa class I heat shock protein (HSP17.7) from Oryza sativa subsp. japonica (Rice).